A 244-amino-acid polypeptide reads, in one-letter code: 1-(5-phosphoribosyl)-5-[(5-phosphoribosylamino)methylideneamino] imidazole-4-carboxamide isomerase (244 aa).

The Proton acceptor role is filled by Asp-13. Residue Asp-132 is the Proton donor of the active site.

The protein belongs to the HisA/HisF family.

Its subcellular location is the cytoplasm. The catalysed reaction is 1-(5-phospho-beta-D-ribosyl)-5-[(5-phospho-beta-D-ribosylamino)methylideneamino]imidazole-4-carboxamide = 5-[(5-phospho-1-deoxy-D-ribulos-1-ylimino)methylamino]-1-(5-phospho-beta-D-ribosyl)imidazole-4-carboxamide. The protein operates within amino-acid biosynthesis; L-histidine biosynthesis; L-histidine from 5-phospho-alpha-D-ribose 1-diphosphate: step 4/9. In Renibacterium salmoninarum (strain ATCC 33209 / DSM 20767 / JCM 11484 / NBRC 15589 / NCIMB 2235), this protein is 1-(5-phosphoribosyl)-5-[(5-phosphoribosylamino)methylideneamino] imidazole-4-carboxamide isomerase.